The primary structure comprises 318 residues: NADH-ubiquinone oxidoreductase chain 1 (318 aa).

8 consecutive transmembrane segments (helical) span residues 2-22 (FMINVLLLIVPILLAVAFLTL), 70-90 (MFIIAPILALTLALTMWIPLP), 100-120 (LGILFMLAMSSLAVYSILWSG), 147-167 (AIILLSVLLMSGSFTLSTLII), 171-191 (YLWLIFPSWPLAMMWFISTLA), 217-237 (AGPFALFFLAEYANIIMMNIF), 253-273 (ELYSINFTIKALLLTCSFLWI), and 294-314 (LPLTLALCMWHVSLPIMLSSI).

Belongs to the complex I subunit 1 family. In terms of assembly, core subunit of respiratory chain NADH dehydrogenase (Complex I) which is composed of 45 different subunits.

It is found in the mitochondrion inner membrane. The enzyme catalyses a ubiquinone + NADH + 5 H(+)(in) = a ubiquinol + NAD(+) + 4 H(+)(out). In terms of biological role, core subunit of the mitochondrial membrane respiratory chain NADH dehydrogenase (Complex I) which catalyzes electron transfer from NADH through the respiratory chain, using ubiquinone as an electron acceptor. Essential for the catalytic activity and assembly of complex I. In Equus caballus (Horse), this protein is NADH-ubiquinone oxidoreductase chain 1 (MT-ND1).